Reading from the N-terminus, the 336-residue chain is UbiA prenyltransferase domain-containing protein 1 (336 aa).

A disordered region spans residues 1–22; that stretch reads MQEMKPAALSGSNGLNGASGSS. A compositionally biased stretch (low complexity) spans 7 to 22; it reads AALSGSNGLNGASGSS. A run of 7 helical transmembrane segments spans residues 79 to 99, 129 to 149, 158 to 178, 180 to 200, 201 to 221, 254 to 274, and 315 to 335; these read LLLLLVCAVAVLLVHGAGNLV, VVMFGAVLYSAGCLCATLLYF, LALIYFGGLSSSFLYTGGIGL, YVALGDVVILITFGPLAVMFA, HAVQVGYLSVLPLVYAVPLAL, LSYVIYNLLLFVPYLLFCILA, and LLMGLFYVFGIILAPQGSLPL.

The protein belongs to the UbiA prenyltransferase family.

Its subcellular location is the endoplasmic reticulum membrane. The protein resides in the golgi apparatus membrane. It localises to the mitochondrion membrane. The enzyme catalyses menadiol + (2E,6E,10E)-geranylgeranyl diphosphate = menaquinol-4 + diphosphate. The catalysed reaction is all-trans-decaprenyl diphosphate + 4-hydroxybenzoate = 4-hydroxy-3-(all-trans-decaprenyl)benzoate + diphosphate. It participates in quinol/quinone metabolism; menaquinone biosynthesis. Its pathway is cofactor biosynthesis; ubiquinone biosynthesis. In terms of biological role, prenyltransferase that mediates the formation of menaquinone-4 (MK-4) and coenzyme Q10. MK-4 is a vitamin K2 isoform required for endothelial cell development. Mediates the conversion of phylloquinone (PK) into MK-4, probably by cleaving the side chain of phylloquinone (PK) to release 2-methyl-1,4-naphthoquinone (menadione; K3) and then prenylating it with geranylgeranyl pyrophosphate (GGPP) to form MK-4. Also plays a role in cardiovascular development independently of MK-4 biosynthesis, by acting as a coenzyme Q10 biosynthetic enzyme: coenzyme Q10, also named ubiquinone, plays an important antioxidant role in the cardiovascular system. Mediates biosynthesis of coenzyme Q10 in the Golgi membrane, leading to protect cardiovascular tissues from nos3/eNOS-dependent oxidative stress. The chain is UbiA prenyltransferase domain-containing protein 1 (ubiad1) from Danio rerio (Zebrafish).